A 131-amino-acid chain; its full sequence is Large ribosomal subunit protein uL18 (131 aa).

The protein belongs to the universal ribosomal protein uL18 family. As to quaternary structure, part of the 50S ribosomal subunit; part of the 5S rRNA/L5/L18/L25 subcomplex. Contacts the 5S and 23S rRNAs.

This is one of the proteins that bind and probably mediate the attachment of the 5S RNA into the large ribosomal subunit, where it forms part of the central protuberance. The chain is Large ribosomal subunit protein uL18 from Corynebacterium kroppenstedtii (strain DSM 44385 / JCM 11950 / CIP 105744 / CCUG 35717).